Reading from the N-terminus, the 386-residue chain is Succinate--CoA ligase [ADP-forming] subunit beta (386 aa).

Residues 9–244 enclose the ATP-grasp domain; that stretch reads KEILRNFGVP…LDEEDPAEVE (236 aa). ATP contacts are provided by residues Lys-46, 53–55, Glu-99, Ala-102, and Glu-107; that span reads GRG. Mg(2+)-binding residues include Asn-199 and Asp-213. Residues Asn-264 and 321–323 contribute to the substrate site; that span reads GIM.

This sequence belongs to the succinate/malate CoA ligase beta subunit family. Heterotetramer of two alpha and two beta subunits. The cofactor is Mg(2+).

The enzyme catalyses succinate + ATP + CoA = succinyl-CoA + ADP + phosphate. It carries out the reaction GTP + succinate + CoA = succinyl-CoA + GDP + phosphate. It functions in the pathway carbohydrate metabolism; tricarboxylic acid cycle; succinate from succinyl-CoA (ligase route): step 1/1. Functionally, succinyl-CoA synthetase functions in the citric acid cycle (TCA), coupling the hydrolysis of succinyl-CoA to the synthesis of either ATP or GTP and thus represents the only step of substrate-level phosphorylation in the TCA. The beta subunit provides nucleotide specificity of the enzyme and binds the substrate succinate, while the binding sites for coenzyme A and phosphate are found in the alpha subunit. This is Succinate--CoA ligase [ADP-forming] subunit beta from Polaromonas naphthalenivorans (strain CJ2).